The chain runs to 156 residues: Snaclec subunit B (156 aa).

The first 23 residues, 1–23, serve as a signal peptide directing secretion; that stretch reads MGRSIFVNLGLLVVAFSLRGSEA. Disulfide bonds link cysteine 25-cysteine 36, cysteine 53-cysteine 144, and cysteine 119-cysteine 136. The 114-residue stretch at 32–145 folds into the C-type lectin domain; the sequence is YDKYCYKVFD…CKSTLPFTCK (114 aa).

This sequence belongs to the snaclec family. As to quaternary structure, heterodimer of subunits A and B; disulfide-linked. Expressed by the venom gland.

The protein resides in the secreted. In terms of biological role, interferes with one step of hemostasis (modulation of platelet aggregation, or coagulation cascade, for example). The protein is Snaclec subunit B of Philodryas olfersii (Green snake).